We begin with the raw amino-acid sequence, 852 residues long: DNA mismatch repair protein MutS (852 aa).

602–609 contacts ATP; that stretch reads GPNMSGKS.

The protein belongs to the DNA mismatch repair MutS family.

This protein is involved in the repair of mismatches in DNA. It is possible that it carries out the mismatch recognition step. This protein has a weak ATPase activity. The sequence is that of DNA mismatch repair protein MutS from Streptococcus thermophilus (strain ATCC BAA-491 / LMD-9).